The primary structure comprises 509 residues: Glycogen synthase 2 (509 aa).

Position 15 (Lys15) interacts with ADP-alpha-D-glucose.

This sequence belongs to the glycosyltransferase 1 family. Bacterial/plant glycogen synthase subfamily.

The enzyme catalyses [(1-&gt;4)-alpha-D-glucosyl](n) + ADP-alpha-D-glucose = [(1-&gt;4)-alpha-D-glucosyl](n+1) + ADP + H(+). It functions in the pathway glycan biosynthesis; glycogen biosynthesis. Synthesizes alpha-1,4-glucan chains using ADP-glucose. The protein is Glycogen synthase 2 (glgA2) of Agrobacterium fabrum (strain C58 / ATCC 33970) (Agrobacterium tumefaciens (strain C58)).